The following is a 226-amino-acid chain: Phosphoheptose isomerase (226 aa).

The 163-residue stretch at 50–212 (IAGVFETGGK…ERMMGYGTEC (163 aa)) folds into the SIS domain. 65 to 67 (NGG) is a substrate binding site. The Zn(2+) site is built by histidine 74 and glutamate 78. Residues glutamate 78, 109–110 (ND), 135–137 (STS), serine 140, and glutamine 188 each bind substrate. 2 residues coordinate Zn(2+): glutamine 188 and histidine 196.

Belongs to the SIS family. GmhA subfamily. The cofactor is Zn(2+).

The protein resides in the cytoplasm. It carries out the reaction 2 D-sedoheptulose 7-phosphate = D-glycero-alpha-D-manno-heptose 7-phosphate + D-glycero-beta-D-manno-heptose 7-phosphate. The protein operates within carbohydrate biosynthesis; D-glycero-D-manno-heptose 7-phosphate biosynthesis; D-glycero-alpha-D-manno-heptose 7-phosphate and D-glycero-beta-D-manno-heptose 7-phosphate from sedoheptulose 7-phosphate: step 1/1. Catalyzes the isomerization of sedoheptulose 7-phosphate in D-glycero-D-manno-heptose 7-phosphate. This is Phosphoheptose isomerase from Chlorobium phaeobacteroides (strain DSM 266 / SMG 266 / 2430).